Consider the following 111-residue polypeptide: MSDAAVDTSSEITTKDLKEKKEVVEEAENGRDAPANGNAQNEENGEQEADNEVDEEEEEGGEEEEEEEEGDGEEEDGDEDEEAEAPTGKRVAEDDEDDDVDTKKQKTEEDD.

Residue methionine 1 is modified to N-acetylmethionine. The tract at residues 1-111 (MSDAAVDTSS…TKKQKTEEDD (111 aa)) is disordered. Serine 2 is subject to N-acetylserine; in Prothymosin alpha, N-terminally processed. The residue at position 2 (serine 2) is a Phosphoserine. Threonine 8 is subject to Phosphothreonine. Residues serine 9 and serine 10 each carry the phosphoserine modification. Residues threonine 13 and threonine 14 each carry the phosphothreonine modification. Over residues 13 to 31 (TTKDLKEKKEVVEEAENGR) the composition is skewed to basic and acidic residues. Lysine 15 carries the N6-acetyllysine; alternate modification. An N6-succinyllysine; alternate modification is found at lysine 15. Over residues 43–84 (ENGEQEADNEVDEEEEEGGEEEEEEEEGDGEEEDGDEDEEAE) the composition is skewed to acidic residues. Basic and acidic residues predominate over residues 101–111 (DTKKQKTEEDD). Threonine 102 carries the phosphothreonine modification. Lysine 103 carries the N6-acetyllysine; alternate modification. Residue lysine 103 forms a Glycyl lysine isopeptide (Lys-Gly) (interchain with G-Cter in SUMO2); alternate linkage. Threonine 107 carries the post-translational modification Phosphothreonine.

The protein belongs to the pro/parathymosin family. Interacts with NUPR1; regulates apoptotic process. Post-translationally, covalently linked to a small RNA of about 20 nucleotides.

The protein localises to the nucleus. Its function is as follows. Prothymosin alpha may mediate immune function by conferring resistance to certain opportunistic infections. This is Prothymosin alpha (Ptma) from Mus musculus (Mouse).